The following is a 317-amino-acid chain: L-lactate dehydrogenase 1 (317 aa).

NAD(+)-binding positions include Val-17, Asp-38, Lys-43, Tyr-69, and 83-84 (GA). Gln-86 and Arg-92 together coordinate substrate. Residues Ser-105, 122–124 (ATN), and Ser-147 contribute to the NAD(+) site. 124-127 (NPVD) lines the substrate pocket. Residue 152–155 (DSAR) coordinates substrate. His-179 (proton acceptor) is an active-site residue. Tyr-223 is subject to Phosphotyrosine. Thr-232 provides a ligand contact to substrate.

Belongs to the LDH/MDH superfamily. LDH family. Homotetramer.

It is found in the cytoplasm. The enzyme catalyses (S)-lactate + NAD(+) = pyruvate + NADH + H(+). It functions in the pathway fermentation; pyruvate fermentation to lactate; (S)-lactate from pyruvate: step 1/1. Its function is as follows. Catalyzes the conversion of lactate to pyruvate (Potential). Appears to be the primary factor that allows S.aureus growth during nitrosative stress in both aerobically and anaerobically cultured cells. The chain is L-lactate dehydrogenase 1 from Staphylococcus aureus (strain bovine RF122 / ET3-1).